We begin with the raw amino-acid sequence, 76 residues long: Cytochrome c oxidase subunit 6C-1 (76 aa).

Residues 2–10 (SLAKPAMRG) lie on the Mitochondrial matrix side of the membrane. A helical membrane pass occupies residues 11-51 (LLGKRLRFHLPIAFTLSLVAALGFKYGVTEPRKQAYADFYK). Residues 52–76 (QYDAVKDFNAMREAGIFESVRPSGE) are Mitochondrial intermembrane-facing.

Belongs to the cytochrome c oxidase subunit 6c family. As to quaternary structure, component of the cytochrome c oxidase (complex IV, CIV), a multisubunit enzyme composed of 14 subunits. The complex is composed of a catalytic core of 3 subunits MT-CO1, MT-CO2 and MT-CO3, encoded in the mitochondrial DNA, and 11 supernumerary subunits COX4I, COX5A, COX5B, COX6A, COX6B, COX6C, COX7A, COX7B, COX7C, COX8 and NDUFA4, which are encoded in the nuclear genome. The complex exists as a monomer or a dimer and forms supercomplexes (SCs) in the inner mitochondrial membrane with NADH-ubiquinone oxidoreductase (complex I, CI) and ubiquinol-cytochrome c oxidoreductase (cytochrome b-c1 complex, complex III, CIII), resulting in different assemblies (supercomplex SCI(1)III(2)IV(1) and megacomplex MCI(2)III(2)IV(2)).

It localises to the mitochondrion inner membrane. Its pathway is energy metabolism; oxidative phosphorylation. Functionally, component of the cytochrome c oxidase, the last enzyme in the mitochondrial electron transport chain which drives oxidative phosphorylation. The respiratory chain contains 3 multisubunit complexes succinate dehydrogenase (complex II, CII), ubiquinol-cytochrome c oxidoreductase (cytochrome b-c1 complex, complex III, CIII) and cytochrome c oxidase (complex IV, CIV), that cooperate to transfer electrons derived from NADH and succinate to molecular oxygen, creating an electrochemical gradient over the inner membrane that drives transmembrane transport and the ATP synthase. Cytochrome c oxidase is the component of the respiratory chain that catalyzes the reduction of oxygen to water. Electrons originating from reduced cytochrome c in the intermembrane space (IMS) are transferred via the dinuclear copper A center (CU(A)) of subunit 2 and heme A of subunit 1 to the active site in subunit 1, a binuclear center (BNC) formed by heme A3 and copper B (CU(B)). The BNC reduces molecular oxygen to 2 water molecules using 4 electrons from cytochrome c in the IMS and 4 protons from the mitochondrial matrix. This Thunnus obesus (Bigeye tuna) protein is Cytochrome c oxidase subunit 6C-1.